Consider the following 516-residue polypeptide: Glycosyl hydrolase family 109 protein 4 (516 aa).

The N-terminal stretch at 1-18 (MKKIKLLLVAGACVVLSA) is a signal peptide. A lipid anchor (N-palmitoyl cysteine) is attached at Cys-19. A lipid anchor (S-diacylglycerol cysteine) is attached at Cys-19. Residues 76–77 (MR), Asp-98, 146–149 (WLHH), 166–167 (EV), and Asn-195 contribute to the NAD(+) site. Residues Tyr-224, Arg-247, 259-262 (YATH), and Tyr-337 each bind substrate. Tyr-259 provides a ligand contact to NAD(+).

Belongs to the Gfo/Idh/MocA family. Glycosyl hydrolase 109 subfamily. The cofactor is NAD(+).

It localises to the cell membrane. Its function is as follows. Glycosidase. The sequence is that of Glycosyl hydrolase family 109 protein 4 from Phocaeicola vulgatus (strain ATCC 8482 / DSM 1447 / JCM 5826 / CCUG 4940 / NBRC 14291 / NCTC 11154) (Bacteroides vulgatus).